The primary structure comprises 235 residues: Aspartate/glutamate leucyltransferase (235 aa).

This sequence belongs to the R-transferase family. Bpt subfamily.

The protein resides in the cytoplasm. It carries out the reaction N-terminal L-glutamyl-[protein] + L-leucyl-tRNA(Leu) = N-terminal L-leucyl-L-glutamyl-[protein] + tRNA(Leu) + H(+). The enzyme catalyses N-terminal L-aspartyl-[protein] + L-leucyl-tRNA(Leu) = N-terminal L-leucyl-L-aspartyl-[protein] + tRNA(Leu) + H(+). Its function is as follows. Functions in the N-end rule pathway of protein degradation where it conjugates Leu from its aminoacyl-tRNA to the N-termini of proteins containing an N-terminal aspartate or glutamate. The chain is Aspartate/glutamate leucyltransferase from Pseudomonas fluorescens (strain Pf0-1).